The sequence spans 278 residues: Autotransporter adhesin BtaF (278 aa).

The signal sequence occupies residues methionine 1 to alanine 29. The interval proline 30–alanine 182 is surface exposed passenger domain. The segment at leucine 186–glycine 224 is outer membrane translocation of the passenger domain. Residues lysine 225–asparagine 278 are translocator domain.

The protein belongs to the autotransporter-2 (AT-2) (TC 1.B.40) family. In terms of assembly, homotrimer.

The protein resides in the cell surface. The protein localises to the cell outer membrane. Functionally, participates in bacterial attachment to several surfaces, including various extracellular matrix (ECM) components and a hydrophobic abiotic surface. Involved in adhesion to host epithelial cells and is required for full virulence in mice. Also implicated in the resistance to porcine serum. This chain is Autotransporter adhesin BtaF, found in Brucella suis biovar 1 (strain 1330).